Consider the following 350-residue polypeptide: Lipase chaperone (350 aa).

Residues 12 to 32 form a helical membrane-spanning segment; sequence IVLYLILGCVVVCGVWYSFDV.

The protein belongs to the lipase chaperone family.

Its subcellular location is the cell inner membrane. In terms of biological role, may be involved in the folding of the extracellular lipase during its passage through the periplasm. In Xylella fastidiosa (strain 9a5c), this protein is Lipase chaperone (lifO).